A 217-amino-acid polypeptide reads, in one-letter code: Ribose-5-phosphate isomerase A (217 aa).

Substrate-binding positions include 28–31, 81–84, and 94–97; these read TGST, DGAD, and KGGG. The Proton acceptor role is filled by Glu103. A substrate-binding site is contributed by Lys121.

This sequence belongs to the ribose 5-phosphate isomerase family. As to quaternary structure, homodimer.

It carries out the reaction aldehydo-D-ribose 5-phosphate = D-ribulose 5-phosphate. The protein operates within carbohydrate degradation; pentose phosphate pathway; D-ribose 5-phosphate from D-ribulose 5-phosphate (non-oxidative stage): step 1/1. In terms of biological role, catalyzes the reversible conversion of ribose-5-phosphate to ribulose 5-phosphate. The polypeptide is Ribose-5-phosphate isomerase A (Aeromonas salmonicida (strain A449)).